Here is a 115-residue protein sequence, read N- to C-terminus: Nitrogenase-stabilizing/protective protein NifW (115 aa).

Belongs to the NifW family. In terms of assembly, homotrimer; associates with NifD.

Functionally, may protect the nitrogenase Fe-Mo protein from oxidative damage. In Azotobacter vinelandii (strain DJ / ATCC BAA-1303), this protein is Nitrogenase-stabilizing/protective protein NifW.